The following is a 239-amino-acid chain: 3-dehydroquinate dehydratase (239 aa).

3-dehydroquinate is bound by residues 35-37 (ELR) and arginine 70. The active-site Proton donor/acceptor is the histidine 133. Residue lysine 160 is the Schiff-base intermediate with substrate of the active site. 3-dehydroquinate is bound by residues arginine 202 and glutamine 225.

It belongs to the type-I 3-dehydroquinase family. Homodimer.

The catalysed reaction is 3-dehydroquinate = 3-dehydroshikimate + H2O. The protein operates within metabolic intermediate biosynthesis; chorismate biosynthesis; chorismate from D-erythrose 4-phosphate and phosphoenolpyruvate: step 3/7. In terms of biological role, involved in the third step of the chorismate pathway, which leads to the biosynthesis of aromatic amino acids. Catalyzes the cis-dehydration of 3-dehydroquinate (DHQ) and introduces the first double bond of the aromatic ring to yield 3-dehydroshikimate. This Staphylococcus saprophyticus subsp. saprophyticus (strain ATCC 15305 / DSM 20229 / NCIMB 8711 / NCTC 7292 / S-41) protein is 3-dehydroquinate dehydratase.